Consider the following 195-residue polypeptide: Achaete-scute homolog 1b (195 aa).

Residues Met-66–Leu-118 form the bHLH domain. The interval Val-141–Glu-164 is disordered.

Efficient DNA binding requires dimerization with another bHLH protein. As to expression, in the 24 hours embryo, expressed in hindbrain close to the anterior and posterior boundaries of rhombomeres 2-6 and in ventral cells close to the floor plate of most rhombomeres. Also expressed in the telencephalon, diencephalon, tegmentum and spinal cord at sites distinct from those expressing ascl1a. Not expressed in the adenohypophysis.

The protein resides in the nucleus. Functionally, transcriptional regulator. May mediate transcription activation by binding to the E box-containing promoter. Involved in neurogenesis. Involved in maintaining rhombomere boundaries in the hindbrain, probably via up-regulation of delta expression. May mediate transcription activation by binding to the E box-containing promoter. The polypeptide is Achaete-scute homolog 1b (Danio rerio (Zebrafish)).